The following is a 534-amino-acid chain: MFS transporter fmqE (534 aa).

A run of 12 helical transmembrane segments spans residues 48–68 (LLLF…VCAS), 109–129 (LWTS…GFLA), 136–156 (WTAV…VFSS), 169–189 (GAVV…VAPI), 194–214 (ALLQ…LGIV), 228–248 (IVFG…FLVP), 326–346 (AIGV…GLNV), 349–369 (VFDI…LGWL), 379–399 (LWLW…ALGF), 407–427 (LAIA…TVGV), 447–467 (VAFI…PYMY), and 478–498 (TGFV…FLVP).

This sequence belongs to the major facilitator superfamily. Sugar transporter (TC 2.A.1.1) family.

It is found in the cytoplasmic vesicle membrane. Functionally, MFS transporter; part of the gene cluster that mediates the biosynthesis of the antitumor cytotoxic peptidyl alkaloids fumiquinazolines that confer a dual-usage capability to defend against phagocytes in the environment and animal hosts. Probably involved in fumiquinazolines metabolism and transport. The sequence is that of MFS transporter fmqE from Aspergillus fumigatus (strain ATCC MYA-4609 / CBS 101355 / FGSC A1100 / Af293) (Neosartorya fumigata).